Here is a 404-residue protein sequence, read N- to C-terminus: Exodeoxyribonuclease 7 large subunit (404 aa).

This sequence belongs to the XseA family. In terms of assembly, heterooligomer composed of large and small subunits.

The protein resides in the cytoplasm. It catalyses the reaction Exonucleolytic cleavage in either 5'- to 3'- or 3'- to 5'-direction to yield nucleoside 5'-phosphates.. Its function is as follows. Bidirectionally degrades single-stranded DNA into large acid-insoluble oligonucleotides, which are then degraded further into small acid-soluble oligonucleotides. This Fusobacterium nucleatum subsp. nucleatum (strain ATCC 25586 / DSM 15643 / BCRC 10681 / CIP 101130 / JCM 8532 / KCTC 2640 / LMG 13131 / VPI 4355) protein is Exodeoxyribonuclease 7 large subunit.